Here is a 202-residue protein sequence, read N- to C-terminus: MSRYRGPRVKIIRRLGALPGLTNKTPQLKSSPINQSTSNKKISQYRIRLEEKQKLRFHYGITERQLLNYVRIARKAKGSTGEILLQLLEMRLDNVIFRLGMSPTIPGARQLVNHRHILVNGHIVDIPSYRCKPQDFITIKNQRKSQAIINKNMNFYRKYKIPNHLIYNSLDKKGLVNQILDRESIGLKINELLVVEYYSRQA.

Residues 90 to 150 (MRLDNVIFRL…NQRKSQAIIN (61 aa)) enclose the S4 RNA-binding domain.

It belongs to the universal ribosomal protein uS4 family. Part of the 30S ribosomal subunit. Contacts protein S5. The interaction surface between S4 and S5 is involved in control of translational fidelity.

The protein resides in the plastid. It is found in the chloroplast. Its function is as follows. One of the primary rRNA binding proteins, it binds directly to 16S rRNA where it nucleates assembly of the body of the 30S subunit. Functionally, with S5 and S12 plays an important role in translational accuracy. The protein is Small ribosomal subunit protein uS4c (rps4) of Canalohypopterygium tamariscinum (Moss).